The sequence spans 723 residues: Calpastatin (723 aa).

2 disordered regions span residues Met-1–Cys-402 and Ser-422–Leu-509. Over residues Pro-21–Ala-30 the composition is skewed to basic residues. A Glycyl lysine isopeptide (Lys-Gly) (interchain with G-Cter in SUMO2) cross-link involves residue Lys-32. Residues Val-46 to Val-84 are compositionally biased toward basic and acidic residues. An N6-acetyllysine modification is found at Lys-50. Composition is skewed to low complexity over residues Ser-85–Glu-94 and Ser-113–Glu-125. Ser-87 bears the Phosphoserine mark. The residue at position 137 (Thr-137) is a Phosphothreonine. Residues Thr-157–Lys-173 show a composition bias toward acidic residues. Residues Glu-171 to Ser-224 form an Inhibitory domain 1 repeat. Over residues Glu-195 to Gly-216 the composition is skewed to basic and acidic residues. Phosphoserine is present on residues Ser-224 and Ser-245. 2 stretches are compositionally biased toward basic and acidic residues: residues Asp-249–Leu-263 and Pro-306–Ser-367. An Inhibitory domain 2 repeat occupies Arg-307 to Ala-359. 3 positions are modified to phosphoserine: Ser-367, Ser-369, and Ser-376. Residues Asp-378–Arg-396 are compositionally biased toward basic and acidic residues. Ser-443 carries the phosphoserine modification. Residues Gly-445–Glu-504 are compositionally biased toward basic and acidic residues. Residues Ala-449–Val-502 form an Inhibitory domain 3 repeat. Ser-519 and Ser-530 each carry phosphoserine. Residues Ser-547 to Ser-723 form a disordered region. Residues Gln-548–Pro-560 show a composition bias toward low complexity. Residues Asp-562–Asp-571 are compositionally biased toward basic and acidic residues. Phosphoserine is present on residues Ser-578 and Ser-580. The stretch at Pro-586 to Pro-642 is one Inhibitory domain 4 repeat. Basic and acidic residues predominate over residues Pro-586–Arg-643. A compositionally biased stretch (polar residues) spans Asn-653–Ala-670. Over residues Pro-672–Leu-690 the composition is skewed to low complexity. Residues Lys-701–Ser-723 show a composition bias toward basic and acidic residues.

Belongs to the protease inhibitor I27 (calpastatin) family.

Functionally, specific inhibition of calpain (calcium-dependent cysteine protease). Plays a key role in postmortem tenderization of meat and have been proposed to be involved in muscle protein degradation in living tissue. The protein is Calpastatin (CAST) of Ovis aries (Sheep).